The sequence spans 277 residues: Digeranylgeranylglyceryl phosphate synthase (277 aa).

A run of 8 helical transmembrane segments spans residues 16–36 (LLAG…LPEL), 40–60 (ILVF…NDYF), 83–105 (AALW…INIW), 107–124 (FLLA…AWKL), 146–166 (GAIA…AFLV), 202–222 (VGAL…KAGI), 224–244 (LGYL…FLIL), and 256–276 (QILL…ASLV).

It belongs to the UbiA prenyltransferase family. DGGGP synthase subfamily. It depends on Mg(2+) as a cofactor.

It localises to the cell membrane. The catalysed reaction is sn-3-O-(geranylgeranyl)glycerol 1-phosphate + (2E,6E,10E)-geranylgeranyl diphosphate = 2,3-bis-O-(geranylgeranyl)-sn-glycerol 1-phosphate + diphosphate. It functions in the pathway membrane lipid metabolism; glycerophospholipid metabolism. Prenyltransferase that catalyzes the transfer of the geranylgeranyl moiety of geranylgeranyl diphosphate (GGPP) to the C2 hydroxyl of (S)-3-O-geranylgeranylglyceryl phosphate (GGGP). This reaction is the second ether-bond-formation step in the biosynthesis of archaeal membrane lipids. The chain is Digeranylgeranylglyceryl phosphate synthase from Thermococcus kodakarensis (strain ATCC BAA-918 / JCM 12380 / KOD1) (Pyrococcus kodakaraensis (strain KOD1)).